The following is a 230-amino-acid chain: Orotidine 5'-phosphate decarboxylase (230 aa).

Residues D12, K34, 61–70, T116, R177, Q186, and R207 each bind substrate; that span reads DMKLLDIDNT. Residue K63 is the Proton donor of the active site.

Belongs to the OMP decarboxylase family. Type 1 subfamily. In terms of assembly, homodimer.

The enzyme catalyses orotidine 5'-phosphate + H(+) = UMP + CO2. The protein operates within pyrimidine metabolism; UMP biosynthesis via de novo pathway; UMP from orotate: step 2/2. In terms of biological role, catalyzes the decarboxylation of orotidine 5'-monophosphate (OMP) to uridine 5'-monophosphate (UMP). This is Orotidine 5'-phosphate decarboxylase from Rhizobium rhizogenes (strain K84 / ATCC BAA-868) (Agrobacterium radiobacter).